We begin with the raw amino-acid sequence, 551 residues long: Putative transport protein NTHI0043 (551 aa).

The next 5 membrane-spanning stretches (helical) occupy residues 4–24 (IAIT…IGHW), 28–48 (GVGL…HFTN), 65–85 (FGLI…FFSS), 95–115 (AFAI…HKIA), and 157–177 (VSYA…MWLI). RCK C-terminal domains are found at residues 191–275 (RFNA…IIGY) and 277–360 (VDAP…VIGN). 6 helical membrane passes run 370 to 390 (MLPV…PFYI), 402 to 424 (AGGP…LYWF), 438 to 458 (IVLF…DTLV), 463 to 483 (LEWM…TGIL), 492 to 512 (YLTI…LAFA), and 529 to 549 (VYPL…VLLW).

This sequence belongs to the AAE transporter (TC 2.A.81) family. YidE subfamily.

It localises to the cell membrane. The sequence is that of Putative transport protein NTHI0043 from Haemophilus influenzae (strain 86-028NP).